The chain runs to 196 residues: Interleukin-23 subunit alpha (196 aa).

A signal peptide spans 1–21; the sequence is MLDCRAIILLWLLPWATQGLA.

It belongs to the IL-6 superfamily. Heterodimer with IL12B; disulfide-linked. The heterodimer is known as interleukin IL-23. Interacts with IL23R; this interaction enables recruitment of IL12RB1.

The protein localises to the secreted. In terms of biological role, associates with IL12B to form the pro-inflammatory cytokine IL-23 that plays different roles in innate and adaptive immunity. Released by antigen-presenting cells such as dendritic cells or macrophages, binds to a heterodimeric receptor complex composed of IL12RB1 and IL23R to activate JAK2 and TYK2 which then phosphorylate the receptor to form a docking site leading to the phosphorylation of STAT3 and STAT4. This process leads to activation of several pathways including p38 MAPK or NF-kappa-B and promotes the production of pro-inflammatory cytokines such as interleukin-17A/IL17A. In turn, participates in the early and effective intracellular bacterial clearance. Promotes the expansion and survival of T-helper 17 cells, a CD4-positive helper T-cell subset that produces IL-17, as well as other IL-17-producing cells. The chain is Interleukin-23 subunit alpha (Il23a) from Rattus norvegicus (Rat).